The sequence spans 191 residues: Molybdenum cofactor guanylyltransferase (191 aa).

GTP is bound by residues 11–13, lysine 23, aspartate 66, and aspartate 97; that span reads LCG. Aspartate 97 is a Mg(2+) binding site.

This sequence belongs to the MobA family. As to quaternary structure, monomer. Requires Mg(2+) as cofactor.

The protein resides in the cytoplasm. It carries out the reaction Mo-molybdopterin + GTP + H(+) = Mo-molybdopterin guanine dinucleotide + diphosphate. Functionally, transfers a GMP moiety from GTP to Mo-molybdopterin (Mo-MPT) cofactor (Moco or molybdenum cofactor) to form Mo-molybdopterin guanine dinucleotide (Mo-MGD) cofactor. The protein is Molybdenum cofactor guanylyltransferase of Campylobacter jejuni subsp. doylei (strain ATCC BAA-1458 / RM4099 / 269.97).